Here is a 367-residue protein sequence, read N- to C-terminus: Dimethyladenosine transferase 1, mitochondrial (367 aa).

Residues Met1 to Phe16 constitute a mitochondrion transit peptide. S-adenosyl-L-methionine contacts are provided by residues Gln30–Leu33, Asn31, Leu33, Gly58, Glu80, Asp106, and Asn141.

Belongs to the class I-like SAM-binding methyltransferase superfamily. rRNA adenine N(6)-methyltransferase family. KsgA subfamily.

Its subcellular location is the mitochondrion. Functionally, probable S-adenosyl-L-methionine-dependent methyltransferase which specifically dimethylates mitochondrial 12S rRNA at the conserved stem loop. Also required for basal transcription of mitochondrial DNA. Stimulates transcription independently of the methyltransferase activity. This chain is Dimethyladenosine transferase 1, mitochondrial (tfbm-1), found in Caenorhabditis elegans.